We begin with the raw amino-acid sequence, 228 residues long: uncharacterized protein (228 aa).

Residues H5–L119 form the Response regulatory domain. D54 carries the post-translational modification 4-aspartylphosphate. Positions G130–G228 form a DNA-binding region, ompR/PhoB-type.

In terms of processing, phosphorylated by YkoH.

The protein resides in the cytoplasm. In terms of biological role, probable member of the two-component regulatory system YkoH/YkoG. This is an uncharacterized protein from Bacillus subtilis (strain 168).